Consider the following 274-residue polypeptide: MDIKAFKMDGLGNDFVIIDQRSQDFNLDKDQIIKICDRSFIGCDQLILIKKNKEIDANVEFFNSDGSISGACGNGTRCVADLLSKESGKKEITLLTTSGSLKSKILGNNLVETEIGIPKVNWQEIPLSKQLDTQDLKIEIIDRNNTKHIGGIAINVGNPHIIFFVDDIEAFDLKNIGPKIENHPLFPEKCNVTLAKVINRNLIKVKVWERGAGLTKACGTAACATAVAANINNLVEKTTDIEFVLGSLTISIDERNSIHMKGPVSDIKNINIKL.

Residues Asn-13, Gln-45, and Asn-63 each coordinate substrate. Catalysis depends on Cys-72, which acts as the Proton donor. Substrate is bound by residues 73–74, Asn-158, Asn-191, and 209–210; these read GN and ER. The active-site Proton acceptor is Cys-218. 219–220 is a binding site for substrate; the sequence is GT.

The protein belongs to the diaminopimelate epimerase family. In terms of assembly, homodimer.

It is found in the cytoplasm. It catalyses the reaction (2S,6S)-2,6-diaminopimelate = meso-2,6-diaminopimelate. The protein operates within amino-acid biosynthesis; L-lysine biosynthesis via DAP pathway; DL-2,6-diaminopimelate from LL-2,6-diaminopimelate: step 1/1. Its function is as follows. Catalyzes the stereoinversion of LL-2,6-diaminopimelate (L,L-DAP) to meso-diaminopimelate (meso-DAP), a precursor of L-lysine and an essential component of the bacterial peptidoglycan. In Pelagibacter ubique (strain HTCC1062), this protein is Diaminopimelate epimerase.